The sequence spans 350 residues: MKFLDQAKIYVKSGDGGDGVVAFRREKYIEFGGPDGGNGGRGGDIVFEAAGNLNTLIDFRYTQHFRARKGGNGAGSDRTGAAAAPVLIQVPVGTQIFDEDRETMLADLDQPGKRIVLCHGGDGGRGNAHFKTSTNRAPRRADKGWPGEERWIWLRLKLIADVGLVGLPNAGKSTFLSVVSAARPKIADYPFTTLHPQLGVVRLSVAEEFVIADIPGLIEGAHEGAGLGDRFLGHVERCAVLLHLVDGAAGDVVKAWRTIRHELEAYDGGLAAKPEIIALNKIDAMTPQQISSRRRALEKASGMPVVTLSGVTRQNLDDVLRLLQDRVTATREAARDAAPPQAAAGREETA.

The Obg domain maps to Met1–Ile159. Residues Ala160 to Thr328 form the OBG-type G domain. GTP-binding positions include Gly166–Ser173, Phe191–His195, Asp213–Gly216, Asn280–Asp283, and Ser309–Val311. Mg(2+) contacts are provided by Ser173 and Thr193. A disordered region spans residues Arg331 to Ala350.

Belongs to the TRAFAC class OBG-HflX-like GTPase superfamily. OBG GTPase family. Monomer. It depends on Mg(2+) as a cofactor.

The protein resides in the cytoplasm. Its function is as follows. An essential GTPase which binds GTP, GDP and possibly (p)ppGpp with moderate affinity, with high nucleotide exchange rates and a fairly low GTP hydrolysis rate. Plays a role in control of the cell cycle, stress response, ribosome biogenesis and in those bacteria that undergo differentiation, in morphogenesis control. This Gluconacetobacter diazotrophicus (strain ATCC 49037 / DSM 5601 / CCUG 37298 / CIP 103539 / LMG 7603 / PAl5) protein is GTPase Obg.